The primary structure comprises 1680 residues: MFAVQGNQKFPKGLTKDNIQSLYQQWQVMRNQGATEENNPEFAQISSILRMVQRAHYARMQQMRNQSSEFPDAENTNLRKQQDTLPTTGFNNLPEGKAGMQTLPGRPASNGPTPPNPGNGNVGLNNPSYMNSQASPNIMNAPLQRDTSVPPAPSMVHPHTNTNANSNNLKVYANQLSQQNTSNPTYHNAYDMASMMKNGSRMNNSFPPTTPYPPANDTTVNSSLPHSFASPSSTFEQPHTVQSRAPSVDTTSSSHSFSARNIPANVSMQQQMGRRGSIPVNPSTFSASSPPSGSMLASPYNGYQNDAASFAHSKLPSSANPNTPFNSTATVDVGAAGSHFPYPQPSNLDAINAKTYFQSSSNSPAPYVYRNNLPPSATSFQPSSSRSPSVDPNTVKSAQHIPRMSPSPSASALKTQSHVPSAKVPPTSKLNHAQLAMLKSQIVAYNCLNSPNGQVPPAVQQAIFGRVYGASNEVSPSMPFQQNVPQMSSVKKDTPTRDANMRTSKAPYIQNIPNQFQRRAYSATIPVKNESLAKPSVSPMPLQQSTGKTEVAKRAQFPTNVNYSSCVDPRTYVKTPIPFSKFSSSENLSLIPSLLPPSISWDDVFLSSEIAIACSIANRIDFLEKENRPKSVNKKILQQDKSKSMIELRCLRLLEKQRSLRETINSVIPHSDSLAAGNLRLMFRNVKRQTMQEANLVLALAEKQKTEHAMRQKEKLLTHLRSIMLHRKSIVTKVDKQNKAKTQRCKDIINFHAHLEKEEKKRIERSARQRLQALRADDEAAYLQLLDKAKDTRITHLLKQTDQYLENLTRAVRIQQSNIHSGNTSGKGSNSAELEAPISEEDKNLDYFKVAHRIHEEVEQPKIFVGGTLKDYQLKGLEWMLSLYNNNLNGILADEMGLGKTIQTIAFITYLIEKKNQQGPFLIIVPLSTLTNWIMEFEKWAPSVKKIAYKGPPQLRKTLQSQIRSSNFNVLLTTFEYIIKDRPLLSRIKWVHMIIDEGHRIKNTQSKLTSTLSTYYHSQYRLILTGTPLQNNLPELWALLNFVLPKIFNSIKSFDEWFNTPFANTGGQDKIGLNEEEALLIIKRLHKVLRPFLFRRLKKDVEKELPDKVEKVIKCPLSGLQLKLYQQMKKHGMLFVDGEKGKTGIKGLQNTVMQLKKICNHPFIFEDVERAIDPSGTNVDLLWRAAGKFELLDRILPKLFLTGHKTLMFFQMTQIMTIMEDYLRSKNWKYLRLDGSTKSDDRCSLLAQFNDPKSDVYIFMLSTRAGGLGLNLQTADTVIIFDTDWNPHQDLQAQDRAHRIGQTKEVRILRLITEKSIEENILSRAQYKLDLDGKVIQAGKFDNKSTPEEREAFLRSLLEHDGDDDHDLTYGELQDDELNELISRTDEELVLFKKLDKERAATDIYGKGKPLERLLTVNELPDFYKVEVDSFAVQSSSELEDQYLERKRRRRNSISYTELTLDELNTVDDPSSTLMPRKRGRPRKKTNSGSSLSTPLSQESSLARSGRKNTPSYKQKALRRYCMEIFERLYNLQSEDGRFVNGLFLYPPNRKLYPDYYIIIKRPIALGKIKRNIKNDRYGDVGELIADFMLMFNNAYTYNEEHSIVYEDAKLMEKTLKEVIEDLEKNNSLHAYEEEALNEEQASLVFLENSEAELPLDSGIVSAEDDKVITYEDSSSSYSE.

Disordered regions lie at residues 61 to 135 (QQMR…SQAS), 203 to 258 (NNSF…HSFS), 274 to 300 (RRGS…ASPY), and 367 to 427 (YVYR…VPPT). Residues 62–91 (QMRNQSSEFPDAENTNLRKQQDTLPTTGFN) show a composition bias toward polar residues. Low complexity-rich tracts occupy residues 118 to 127 (GNGNVGLNNP) and 222 to 233 (SSLPHSFASPSS). Residues 234–245 (TFEQPHTVQSRA) show a composition bias toward polar residues. 3 stretches are compositionally biased toward low complexity: residues 247–258 (SVDTTSSSHSFS), 282–299 (PSTF…LASP), and 374–392 (PPSA…SVDP). The segment covering 406–419 (PSPSASALKTQSHV) has biased composition (polar residues). Residues 429-465 (KLNHAQLAMLKSQIVAYNCLNSPNGQVPPAVQQAIFG) enclose the QLQ domain. Over residues 477–489 (SMPFQQNVPQMSS) the composition is skewed to polar residues. Residues 477 to 499 (SMPFQQNVPQMSSVKKDTPTRDA) are disordered. Residues 490–499 (VKKDTPTRDA) show a composition bias toward basic and acidic residues. An HSA domain is found at 704-776 (QKTEHAMRQK…ARQRLQALRA (73 aa)). A compositionally biased stretch (polar residues) spans 817–832 (SNIHSGNTSGKGSNSA). The disordered stretch occupies residues 817 to 836 (SNIHSGNTSGKGSNSAELEA). The region spanning 881 to 1046 (LSLYNNNLNG…WALLNFVLPK (166 aa)) is the Helicase ATP-binding domain. 894–901 (DEMGLGKT) is a binding site for ATP. Positions 996 to 999 (DEGH) match the DEGH box motif. In terms of domain architecture, Helicase C-terminal spans 1191-1354 (LLDRILPKLF…STPEEREAFL (164 aa)). The disordered stretch occupies residues 1466-1511 (TVDDPSSTLMPRKRGRPRKKTNSGSSLSTPLSQESSLARSGRKNTP). Residues 1476-1486 (PRKRGRPRKKT) are compositionally biased toward basic residues. Low complexity predominate over residues 1488–1502 (SGSSLSTPLSQESSL). The 111-residue stretch at 1513 to 1623 (YKQKALRRYC…KTLKEVIEDL (111 aa)) folds into the Bromo domain.

Belongs to the SNF2/RAD54 helicase family. In terms of assembly, component of the SWI/SNF global transcription activator complex composed of at least arp9, arp42, snf5, snf22, snf30, sbf59, sol1, ssr1, ssr2, ssr3, ssr4 and tfg3.

The protein resides in the nucleus. Helicase. Component of the SWI/SNF complex, an ATP-dependent chromatin remodeling complex, required for the positive and negative regulation of gene expression of a large number of genes. It changes chromatin structure by altering DNA-histone contacts within a nucleosome, leading eventually to a change in nucleosome position, thus facilitating or repressing binding of gene-specific transcription factors. This Schizosaccharomyces pombe (strain 972 / ATCC 24843) (Fission yeast) protein is SWI/SNF chromatin-remodeling complex subunit snf22 (snf22).